We begin with the raw amino-acid sequence, 400 residues long: Nucleoside permease NupC (400 aa).

The Cytoplasmic portion of the chain corresponds to 1–3; that stretch reads MDR. The helical transmembrane segment at 4-24 threads the bilayer; the sequence is VLHFVLALAVVAILALLVSSD. The Periplasmic segment spans residues 25-36; that stretch reads RKKIRIRYVIQL. Residues 37–57 traverse the membrane as a helical segment; that stretch reads LVIEVLLAWFFLNSDVGLGFV. The Cytoplasmic segment spans residues 58–86; the sequence is KGFSEMFEKLLGFANEGTNFVFGSMNDQG. The chain crosses the membrane as a helical span at residues 87–107; sequence LAFFFLKVLCPIVFISALIGI. Residues 108-168 lie on the Periplasmic side of the membrane; the sequence is LQHIRVLPVI…GKISRNRMYT (61 aa). The chain crosses the membrane as a helical span at residues 169-189; sequence MAATAMSTVSMSIVGAYMTML. Topologically, residues 190 to 192 are cytoplasmic; sequence EPK. Residues 193 to 213 traverse the membrane as a helical segment; the sequence is YVVAALVLNMFSTFIVLSLIN. At 214–250 the chain is on the periplasmic side; it reads PYRVDASEENIQMSNLHEGQSFFEMLGEYILAGFKVA. A helical membrane pass occupies residues 251 to 271; sequence IIVAAMLIGFIALIAALNALF. Residues 272-281 are Cytoplasmic-facing; the sequence is ATVTGWFGYS. A helical membrane pass occupies residues 282-302; the sequence is ISFQGILGYIFYPIAWVMGVP. The Periplasmic segment spans residues 303–341; the sequence is SSEALQVGSIMATKLVSNEFVAMMDLQKIASTLSPRAEG. The chain crosses the membrane as a helical span at residues 342-362; it reads IISVFLVSFANFSSIGIIAGA. Residues 363 to 378 are Cytoplasmic-facing; it reads VKGLNEEQGNVVSRFG. Residues 379–399 form a helical membrane-spanning segment; it reads LKLVYGSTLVSVLSASIAALV. Position 400 (leucine 400) is a topological domain, periplasmic.

The protein belongs to the concentrative nucleoside transporter (CNT) (TC 2.A.41) family.

The protein resides in the cell inner membrane. The enzyme catalyses adenosine(in) + H(+)(in) = adenosine(out) + H(+)(out). It carries out the reaction uridine(in) + H(+)(in) = uridine(out) + H(+)(out). The catalysed reaction is thymidine(in) + H(+)(in) = thymidine(out) + H(+)(out). It catalyses the reaction cytidine(in) + H(+)(in) = cytidine(out) + H(+)(out). The enzyme catalyses 2'-deoxycytidine(in) + H(+)(in) = 2'-deoxycytidine(out) + H(+)(out). Transport is inhibited by the proton uncoupler dinitrophenol. Inhibited by the nucleoside antibiotic showdomycin. Nucleoside transport protein that can transport adenosine, uridine, thymidine, cytidine and deoxycytidine. Shows weak activity with inosine and xanthosine. Transport is driven by a proton motive force. Does not transport guanosine, deoxyguanosine, hypoxanthine or uracil. Also shows activity with the chemotherapeutic drugs 3'-azido-3'-deoxythymidine (AZT), 2',3'- dideoxycytidine (ddC) and 2'-deoxy-2',2'-difluorocytidine (gemcitabine). The chain is Nucleoside permease NupC from Escherichia coli (strain K12).